The primary structure comprises 1050 residues: Beta-galactosidase (1050 aa).

Substrate-binding residues include Asn-110 and Asp-209. A Na(+)-binding site is contributed by Asp-209. Mg(2+) is bound by residues Glu-432, His-434, and Glu-477. Residues Glu-477 and 553-556 each bind substrate; that span reads EYAH. The active-site Proton donor is the Glu-477. Glu-553 acts as the Nucleophile in catalysis. Asn-613 provides a ligand contact to Mg(2+). Na(+) is bound by residues Phe-617 and Asn-620. Residues Asn-620 and Trp-1023 each contribute to the substrate site.

The protein belongs to the glycosyl hydrolase 2 family. In terms of assembly, homotetramer. Requires Mg(2+) as cofactor. The cofactor is Na(+).

It catalyses the reaction Hydrolysis of terminal non-reducing beta-D-galactose residues in beta-D-galactosides.. This Yersinia enterocolitica serotype O:8 / biotype 1B (strain NCTC 13174 / 8081) protein is Beta-galactosidase.